The following is a 155-amino-acid chain: Small ribosomal subunit protein uS7c (155 aa).

It belongs to the universal ribosomal protein uS7 family. In terms of assembly, part of the 30S ribosomal subunit.

It localises to the plastid. It is found in the chloroplast. In terms of biological role, one of the primary rRNA binding proteins, it binds directly to 16S rRNA where it nucleates assembly of the head domain of the 30S subunit. The protein is Small ribosomal subunit protein uS7c (rps7) of Lactoris fernandeziana.